Reading from the N-terminus, the 1165-residue chain is DNA-directed RNA polymerase III subunit RPC2 (1165 aa).

Residues 1–21 are disordered; sequence MGVNTAGDPQKSQPKINKGGI. The Zn(2+) site is built by cysteine 1111, cysteine 1114, cysteine 1123, and cysteine 1126. The C4-type zinc finger occupies 1111–1126; sequence CGQCGLLGYKGWCNSC.

Belongs to the RNA polymerase beta chain family. Component of the RNA polymerase III (Pol III) complex consisting of 17 subunits.

Its subcellular location is the nucleus. The enzyme catalyses RNA(n) + a ribonucleoside 5'-triphosphate = RNA(n+1) + diphosphate. DNA-dependent RNA polymerase catalyzes the transcription of DNA into RNA using the four ribonucleoside triphosphates as substrates. Second largest core component of RNA polymerase III which synthesizes small RNAs, such as 5S rRNA and tRNAs. Proposed to contribute to the polymerase catalytic activity and forms the polymerase active center together with the largest subunit. Pol III is composed of mobile elements and RPC2 is part of the core element with the central large cleft and probably a clamp element that moves to open and close the cleft. This is DNA-directed RNA polymerase III subunit RPC2 (rpc2) from Schizosaccharomyces pombe (strain 972 / ATCC 24843) (Fission yeast).